The chain runs to 54 residues: uncharacterized protein (54 aa).

To B.subtilis XkdX.

This is an uncharacterized protein from Bacillus subtilis (strain 168).